The primary structure comprises 28 residues: Conotoxin Cl5.3 (28 aa).

It belongs to the conotoxin T superfamily. In terms of processing, contains 2 disulfide bonds that can be either 'C1-C3, C2-C4' or 'C1-C4, C2-C3', since these disulfide connectivities have been observed for conotoxins with cysteine framework V (for examples, see AC P0DQQ7 and AC P81755). Expressed by the venom duct.

The protein resides in the secreted. The sequence is that of Conotoxin Cl5.3 from Californiconus californicus (California cone).